Consider the following 222-residue polypeptide: Phosphate-specific transport system accessory protein PhoU homolog 1 (222 aa).

Belongs to the PhoU family. Homodimer.

It is found in the cytoplasm. Functionally, plays a role in the regulation of phosphate uptake. The chain is Phosphate-specific transport system accessory protein PhoU homolog 1 (phoU1) from Mycobacterium leprae (strain TN).